The following is a 261-amino-acid chain: Calbindin (261 aa).

N-acetylalanine is present on Ala2. Residues 2–7 (AESHLQ) form an interaction with RANBP9 region. 5 consecutive EF-hand domains span residues 11-46 (ITASQFFEIWLHFDADGSGYLEGKELQNLIQELQQA), 53-88 (ELSPEMKTFVDQYGQRDDGKIGIVELAHVLPTEENF), 98-133 (KSCEEFMKTWRKYDTDHSGFIETEELKNFLKDLLEK), 142-177 (KLAEYTDLMLKLFDSNNDGKLELTEMARLLPVQENF), and 186-221 (MCGKEFNKAFELYDQDGNGYIDENELDALLKDLCEK). Asp24, Asp26, Ser28, Tyr30, and Glu35 together coordinate Ca(2+). 14 residues coordinate Ca(2+): Asp111, Asp113, Ser115, Glu122, Asp155, Asn157, Asp159, Lys161, Glu166, Asp199, Asp201, Asn203, Tyr205, and Glu210.

It belongs to the calbindin family. In terms of assembly, interacts with RANBP9.

Its function is as follows. Buffers cytosolic calcium. May stimulate a membrane Ca(2+)-ATPase and a 3',5'-cyclic nucleotide phosphodiesterase. The protein is Calbindin (CALB1) of Homo sapiens (Human).